Reading from the N-terminus, the 434-residue chain is Enolase (434 aa).

Gln-165 is a (2R)-2-phosphoglycerate binding site. The Proton donor role is filled by Glu-207. Residues Asp-244, Glu-291, and Asp-318 each contribute to the Mg(2+) site. Lys-343, Arg-372, Ser-373, and Lys-394 together coordinate (2R)-2-phosphoglycerate. The active-site Proton acceptor is the Lys-343.

Belongs to the enolase family. The cofactor is Mg(2+).

The protein localises to the cytoplasm. The protein resides in the secreted. It is found in the cell surface. It catalyses the reaction (2R)-2-phosphoglycerate = phosphoenolpyruvate + H2O. It functions in the pathway carbohydrate degradation; glycolysis; pyruvate from D-glyceraldehyde 3-phosphate: step 4/5. Functionally, catalyzes the reversible conversion of 2-phosphoglycerate (2-PG) into phosphoenolpyruvate (PEP). It is essential for the degradation of carbohydrates via glycolysis. This chain is Enolase, found in Staphylococcus haemolyticus (strain JCSC1435).